We begin with the raw amino-acid sequence, 236 residues long: 15,16-dihydrobiliverdin:ferredoxin oxidoreductase (236 aa).

Belongs to the HY2 family.

It catalyses the reaction 15,16-dihydrobiliverdin + oxidized 2[4Fe-4S]-[ferredoxin] = biliverdin IXalpha + reduced 2[4Fe-4S]-[ferredoxin] + 2 H(+). Its function is as follows. Catalyzes the two-electron reduction of biliverdin IX-alpha at the C15 methine bridge. The sequence is that of 15,16-dihydrobiliverdin:ferredoxin oxidoreductase from Prochlorococcus marinus (strain MIT 9312).